We begin with the raw amino-acid sequence, 529 residues long: Glucose-6-phosphate isomerase (529 aa).

Glutamate 322 serves as the catalytic Proton donor. Residues histidine 351 and lysine 455 contribute to the active site.

Belongs to the GPI family.

It localises to the cytoplasm. The enzyme catalyses alpha-D-glucose 6-phosphate = beta-D-fructose 6-phosphate. Its pathway is carbohydrate biosynthesis; gluconeogenesis. It functions in the pathway carbohydrate degradation; glycolysis; D-glyceraldehyde 3-phosphate and glycerone phosphate from D-glucose: step 2/4. In terms of biological role, catalyzes the reversible isomerization of glucose-6-phosphate to fructose-6-phosphate. The polypeptide is Glucose-6-phosphate isomerase (Acaryochloris marina (strain MBIC 11017)).